Here is a 265-residue protein sequence, read N- to C-terminus: Mlc titration factor A (265 aa).

Zn(2+) is bound by residues His111, His148, His152, and Glu211.

The protein belongs to the MtfA family. Interacts with Mlc. Zn(2+) is required as a cofactor.

Its subcellular location is the cytoplasm. Its function is as follows. Involved in the modulation of the activity of the glucose-phosphotransferase system (glucose-PTS). Interacts with the transcriptional repressor Mlc, preventing its interaction with DNA and leading to the modulation of expression of genes regulated by Mlc, including ptsG, which encodes the PTS system glucose-specific EIICB component. In terms of biological role, shows zinc-dependent metallopeptidase activity. In Pectobacterium atrosepticum (strain SCRI 1043 / ATCC BAA-672) (Erwinia carotovora subsp. atroseptica), this protein is Mlc titration factor A.